Here is a 301-residue protein sequence, read N- to C-terminus: Probable alpha-L-glutamate ligase (301 aa).

One can recognise an ATP-grasp domain in the interval 104–287 (LQLLARKGIG…VATKVIEFIE (184 aa)). Residues lysine 141, 178–179 (EF), aspartate 187, and 211–213 (RSN) each bind ATP. Residues aspartate 248, glutamate 260, and asparagine 262 each coordinate Mg(2+). Mn(2+) contacts are provided by aspartate 248, glutamate 260, and asparagine 262.

It belongs to the RimK family. Mg(2+) is required as a cofactor. The cofactor is Mn(2+).

The sequence is that of Probable alpha-L-glutamate ligase from Nitrosococcus oceani (strain ATCC 19707 / BCRC 17464 / JCM 30415 / NCIMB 11848 / C-107).